Reading from the N-terminus, the 508-residue chain is ATP synthase subunit alpha, chloroplastic (508 aa).

170–177 (GDRQTGKT) is an ATP binding site.

Belongs to the ATPase alpha/beta chains family. In terms of assembly, F-type ATPases have 2 components, CF(1) - the catalytic core - and CF(0) - the membrane proton channel. CF(1) has five subunits: alpha(3), beta(3), gamma(1), delta(1), epsilon(1). CF(0) has four main subunits: a, b, b' and c.

It localises to the plastid. The protein resides in the chloroplast thylakoid membrane. It catalyses the reaction ATP + H2O + 4 H(+)(in) = ADP + phosphate + 5 H(+)(out). In terms of biological role, produces ATP from ADP in the presence of a proton gradient across the membrane. The alpha chain is a regulatory subunit. In Helianthus annuus (Common sunflower), this protein is ATP synthase subunit alpha, chloroplastic.